The sequence spans 548 residues: Membrane protein insertase YidC (548 aa).

Residues N6–D26 form a helical membrane-spanning segment. The tract at residues N28 to G56 is disordered. Residues P29–T42 are compositionally biased toward low complexity. Transmembrane regions (helical) follow at residues F350–Y370, F424–I444, L458–I478, and P499–V519.

It belongs to the OXA1/ALB3/YidC family. Type 1 subfamily. In terms of assembly, interacts with the Sec translocase complex via SecD. Specifically interacts with transmembrane segments of nascent integral membrane proteins during membrane integration.

The protein localises to the cell inner membrane. Required for the insertion and/or proper folding and/or complex formation of integral membrane proteins into the membrane. Involved in integration of membrane proteins that insert both dependently and independently of the Sec translocase complex, as well as at least some lipoproteins. Aids folding of multispanning membrane proteins. The protein is Membrane protein insertase YidC of Salmonella enteritidis PT4 (strain P125109).